A 395-amino-acid chain; its full sequence is Elongation factor Tu (395 aa).

The region spanning 10–205 (KPHVNIGTIG…VDSYIPLPPR (196 aa)) is the tr-type G domain. Residues 19–26 (GHVDHGKT) are G1. A GTP-binding site is contributed by 19 to 26 (GHVDHGKT). Residue T26 participates in Mg(2+) binding. The tract at residues 60-64 (GITIN) is G2. The G3 stretch occupies residues 81–84 (DCPG). Residues 81–85 (DCPGH) and 136–139 (NKVD) contribute to the GTP site. Residues 136 to 139 (NKVD) form a G4 region. Positions 174–176 (SAT) are G5.

Belongs to the TRAFAC class translation factor GTPase superfamily. Classic translation factor GTPase family. EF-Tu/EF-1A subfamily. In terms of assembly, monomer.

It localises to the cytoplasm. It carries out the reaction GTP + H2O = GDP + phosphate + H(+). In terms of biological role, GTP hydrolase that promotes the GTP-dependent binding of aminoacyl-tRNA to the A-site of ribosomes during protein biosynthesis. The polypeptide is Elongation factor Tu (Terrimonas ferruginea (Flavobacterium ferrugineum)).